The chain runs to 66 residues: Large ribosomal subunit protein bL33c (66 aa).

This sequence belongs to the bacterial ribosomal protein bL33 family.

The protein localises to the plastid. The chain is Large ribosomal subunit protein bL33c from Cuscuta gronovii (Common dodder).